We begin with the raw amino-acid sequence, 698 residues long: Sialic acid-binding Ig-like lectin 11 (698 aa).

The N-terminal stretch at 1-27 (MVPGQAQPQSPEMLLLPLLLPVLGAGS) is a signal peptide. At 28-561 (LNKDPSYSLQ…KLEHGGGLGL (534 aa)) the chain is on the extracellular side. Positions 31–134 (DPSYSLQVQR…DEAWYFFRVE (104 aa)) constitute an Ig-like V-type domain. Cystine bridges form between C49–C186, C54–C114, and C177–C228. N55 and N90 each carry an N-linked (GlcNAc...) asparagine glycan. Residue R132 coordinates N-acetylneuraminate. Ig-like C2-type domains are found at residues 159–244 (PDVY…RTVR), 251–350 (PKDL…LDLS), and 355–452 (PENL…LSLS). A glycan (N-linked (GlcNAc...) asparagine) is linked at N262. The cysteines at positions 287 and 334 are disulfide-linked. Residues N366 and N375 are each glycosylated (N-linked (GlcNAc...) asparagine). The cysteines at positions 391 and 436 are disulfide-linked. N497 and N515 each carry an N-linked (GlcNAc...) asparagine glycan. The helical transmembrane segment at 562 to 584 (GAALGAGVAALLAFCSCLVVFRV) threads the bilayer. Residues 585–698 (KICRKEARKR…EREMSGMVPK (114 aa)) are Cytoplasmic-facing. The segment at 596–635 (AAEQDVPSTLGPISQGHQHECSAGSSQDHPPPGAATYTPG) is disordered. The short motif at 642–647 (LHYASL) is the ITIM motif element. Y668 is subject to Phosphotyrosine. The interval 675–698 (TGQPLRGPGFGLQLEREMSGMVPK) is disordered.

The protein belongs to the immunoglobulin superfamily. SIGLEC (sialic acid binding Ig-like lectin) family. Interacts with PTPN6/SHP-1 and PTPN11/SHP-2 upon phosphorylation. Post-translationally, phosphorylated on tyrosine residues. In terms of tissue distribution, expressed by macrophages in various tissues including Kupffer cells. Also found in brain microglia.

The protein resides in the membrane. Its function is as follows. Putative adhesion molecule that mediates sialic-acid dependent binding to cells. Preferentially binds to alpha-2,8-linked sialic acid. The sialic acid recognition site may be masked by cis interactions with sialic acids on the same cell surface. In the immune response, may act as an inhibitory receptor upon ligand induced tyrosine phosphorylation by recruiting cytoplasmic phosphatase(s) via their SH2 domain(s) that block signal transduction through dephosphorylation of signaling molecules. In Homo sapiens (Human), this protein is Sialic acid-binding Ig-like lectin 11 (SIGLEC11).